The primary structure comprises 426 residues: MTAIVDIIGREILDSRGNPTVEVDVVLEDGAMGRAAVPSGASTGAYEAVELRDGDNSRYHGKGVRKAVDAVNGEIFDAIGGMDAEQQAQIDETLIELDGTANKGRLGANAILGVSLALARAAADSLDIPLYRYVGGVTARTLPVPMMNIVNGGVHADNPIDFQEFMIMPVGVQTFSDALRCGSEIFHTLRSELKKAGHNTNVGDEGGFAPDLPSAGAALDFIMGAIVKAGYRPGDDVALALDPASTEFFKDGKYVYGGEGKTRSIEEQAQYLAKLASDYPIVSIEDGMAEDDFEGWKLVTDMIGKTCQLVGDDLFVTNVTRLADGIRNGRANSILIKVNQIGTLTETLAAVEMAYKAGYTAVMSHRSGETEDSTIADLAVATNCGQIKTGSLSRSDRAAKYNQLLRIEQQLGAQAKYAGRAALKAV.

Q163 contacts (2R)-2-phosphoglycerate. The active-site Proton donor is the E205. Residues D242, E285, and D312 each coordinate Mg(2+). Residues K337, R366, S367, and K388 each contribute to the (2R)-2-phosphoglycerate site. Catalysis depends on K337, which acts as the Proton acceptor.

This sequence belongs to the enolase family. It depends on Mg(2+) as a cofactor.

The protein resides in the cytoplasm. The protein localises to the secreted. It localises to the cell surface. The enzyme catalyses (2R)-2-phosphoglycerate = phosphoenolpyruvate + H2O. The protein operates within carbohydrate degradation; glycolysis; pyruvate from D-glyceraldehyde 3-phosphate: step 4/5. Functionally, catalyzes the reversible conversion of 2-phosphoglycerate (2-PG) into phosphoenolpyruvate (PEP). It is essential for the degradation of carbohydrates via glycolysis. The sequence is that of Enolase from Nitrobacter winogradskyi (strain ATCC 25391 / DSM 10237 / CIP 104748 / NCIMB 11846 / Nb-255).